We begin with the raw amino-acid sequence, 210 residues long: Urease accessory protein UreE (210 aa).

The disordered stretch occupies residues 136-210 (PEGGAYAEPS…HGHSHAHDHK (75 aa)). Composition is skewed to basic and acidic residues over residues 145–169 (SHAH…TSHD) and 178–196 (HDHD…EHCG). Residues 197-210 (HDHHHGHSHAHDHK) show a composition bias toward basic residues.

The protein belongs to the UreE family.

It is found in the cytoplasm. Involved in urease metallocenter assembly. Binds nickel. Probably functions as a nickel donor during metallocenter assembly. In Bradyrhizobium sp. (strain ORS 278), this protein is Urease accessory protein UreE.